A 155-amino-acid chain; its full sequence is Large ribosomal subunit protein uL11 (155 aa).

Belongs to the universal ribosomal protein uL11 family. In terms of assembly, part of the ribosomal stalk of the 50S ribosomal subunit. Interacts with L10 and the large rRNA to form the base of the stalk. L10 forms an elongated spine to which L12 dimers bind in a sequential fashion forming a multimeric L10(L12)X complex.

Forms part of the ribosomal stalk which helps the ribosome interact with GTP-bound translation factors. In Picrophilus torridus (strain ATCC 700027 / DSM 9790 / JCM 10055 / NBRC 100828 / KAW 2/3), this protein is Large ribosomal subunit protein uL11.